The following is a 297-amino-acid chain: Formamidopyrimidine-DNA glycosylase (297 aa).

Pro-2 (schiff-base intermediate with DNA) is an active-site residue. Glu-3 acts as the Proton donor in catalysis. The active-site Proton donor; for beta-elimination activity is Lys-58. Positions 104, 127, and 170 each coordinate DNA. The segment at 261 to 297 adopts an FPG-type zinc-finger fold; it reads SVYDREGKPCRKEGCSGTIQRFVQGGRSTFYCPICQR. The active-site Proton donor; for delta-elimination activity is the Arg-287.

It belongs to the FPG family. Monomer. Zn(2+) serves as cofactor.

It catalyses the reaction Hydrolysis of DNA containing ring-opened 7-methylguanine residues, releasing 2,6-diamino-4-hydroxy-5-(N-methyl)formamidopyrimidine.. The enzyme catalyses 2'-deoxyribonucleotide-(2'-deoxyribose 5'-phosphate)-2'-deoxyribonucleotide-DNA = a 3'-end 2'-deoxyribonucleotide-(2,3-dehydro-2,3-deoxyribose 5'-phosphate)-DNA + a 5'-end 5'-phospho-2'-deoxyribonucleoside-DNA + H(+). Its function is as follows. Involved in base excision repair of DNA damaged by oxidation or by mutagenic agents. Acts as a DNA glycosylase that recognizes and removes damaged bases. Has a preference for oxidized purines, such as 7,8-dihydro-8-oxoguanine (8-oxoG). Has AP (apurinic/apyrimidinic) lyase activity and introduces nicks in the DNA strand. Cleaves the DNA backbone by beta-delta elimination to generate a single-strand break at the site of the removed base with both 3'- and 5'-phosphates. This Chelativorans sp. (strain BNC1) protein is Formamidopyrimidine-DNA glycosylase.